The sequence spans 425 residues: 2-methylserine hydroxymethyltransferase (425 aa).

Residues L126 and G130–L132 each bind (6S)-5,6,7,8-tetrahydrofolate. Residue K235 is modified to N6-(pyridoxal phosphate)lysine.

The protein belongs to the SHMT family. As to quaternary structure, homodimer. Requires pyridoxal 5'-phosphate as cofactor.

The protein resides in the cytoplasm. The enzyme catalyses (6R)-5,10-methylene-5,6,7,8-tetrahydrofolate + D-alanine + H2O = 2-methylserine + (6S)-5,6,7,8-tetrahydrofolate. Its pathway is one-carbon metabolism; tetrahydrofolate interconversion. Catalyzes the reversible interconversion of alpha-methyl-L-serine to D-alanine with tetrahydrofolate (THF) serving as the one-carbon carrier. Cannot use alpha-methyl-D-serine, L-serine, D-serine or L-alanine. The chain is 2-methylserine hydroxymethyltransferase from Aminobacter sp.